Reading from the N-terminus, the 92-residue chain is Large ribosomal subunit protein uL23c (92 aa).

The protein belongs to the universal ribosomal protein uL23 family. Part of the 50S ribosomal subunit.

The protein resides in the plastid. It is found in the chloroplast. Its function is as follows. Binds to 23S rRNA. The polypeptide is Large ribosomal subunit protein uL23c (rpl23) (Mesostigma viride (Green alga)).